Reading from the N-terminus, the 51-residue chain is DNA-binding protein (51 aa).

A disordered region spans residues 1–51 (MVYRRRRSRSADGTYTRRRRSSGYRRRPGRPRTYRRSRSATRRSGYRRRRY). Tandem repeats lie at residues 5–10 (RRRSRS) and 17–22 (RRRRSS). The 2 X 6 AA repeats of R-R-R-R-S-S stretch occupies residues 5-22 (RRRSRSADGTYTRRRRSS). Positions 16–51 (TRRRRSSGYRRRPGRPRTYRRSRSATRRSGYRRRRY) are enriched in basic residues.

Probably phosphorylated in infected cells.

The protein localises to the virion. In terms of biological role, thought to be responsible for DNA condensation during packaging of the nucleocapsids. This is DNA-binding protein (P6.5) from Orgyia pseudotsugata (Douglas-fir tussock moth).